The primary structure comprises 271 residues: Intercellular adhesion molecule 4 (271 aa).

Residues 1–22 (MGSLFPLSLLFFLAAAYPGVGS) form the signal peptide. Residues 23-240 (ALGRRTKRAQ…MLAWSPAPTA (218 aa)) are Extracellular-facing. 2 consecutive Ig-like C2-type domains span residues 62–124 (GKSV…TRWA) and 146–217 (GRKY…LNLD). N-linked (GlcNAc...) asparagine glycosylation is found at N68, N78, N190, and N223. 4 disulfides stabilise this stretch: C69–C113, C69–C117, C73–C117, and C153–C210. Residues 241–261 (LASGSIAALVGILLTVGAAYL) form a helical membrane-spanning segment. The Cytoplasmic segment spans residues 262–271 (CKCLAMKSQA).

This sequence belongs to the immunoglobulin superfamily. ICAM family. N- and O-glycosylated. In terms of tissue distribution, erythrocytes.

It is found in the cell membrane. Its subcellular location is the secreted. Functionally, ICAM proteins are ligands for the leukocyte adhesion protein LFA-1 (integrin alpha-L/beta-2). ICAM4 is also a ligand for alpha-4/beta-1 and alpha-V integrins. The sequence is that of Intercellular adhesion molecule 4 (ICAM4) from Homo sapiens (Human).